The following is a 394-amino-acid chain: Acetate kinase 1 (394 aa).

Asparagine 8 contributes to the Mg(2+) binding site. An ATP-binding site is contributed by lysine 15. Residue arginine 90 participates in substrate binding. The Proton donor/acceptor role is filled by aspartate 147. ATP contacts are provided by residues 207–211 and 282–284; these read HLGSG and DMR. Mg(2+) is bound at residue glutamate 382.

Belongs to the acetokinase family. Homodimer. Requires Mg(2+) as cofactor. The cofactor is Mn(2+).

The protein resides in the cytoplasm. The enzyme catalyses acetate + ATP = acetyl phosphate + ADP. It participates in metabolic intermediate biosynthesis; acetyl-CoA biosynthesis; acetyl-CoA from acetate: step 1/2. In terms of biological role, catalyzes the formation of acetyl phosphate from acetate and ATP. Can also catalyze the reverse reaction. This is Acetate kinase 1 from Latilactobacillus sakei subsp. sakei (strain 23K) (Lactobacillus sakei subsp. sakei).